Here is a 115-residue protein sequence, read N- to C-terminus: Large ribosomal subunit protein bL20 (115 aa).

It belongs to the bacterial ribosomal protein bL20 family.

In terms of biological role, binds directly to 23S ribosomal RNA and is necessary for the in vitro assembly process of the 50S ribosomal subunit. It is not involved in the protein synthesizing functions of that subunit. The chain is Large ribosomal subunit protein bL20 from Prochlorococcus marinus (strain MIT 9301).